The primary structure comprises 510 residues: Dermokine (510 aa).

Residues 1–21 (MKLKGSLACLLLFLLLGSGEA) form the signal peptide. The disordered stretch occupies residues 117 to 362 (VDPAHKSWQG…SSGEGEAVSG (246 aa)). Residues 124 to 137 (WQGTPGSNGAWGTN) are compositionally biased toward polar residues. A compositionally biased stretch (gly residues) spans 141–158 (PSGGHGIPGSQGSSGGPG). Residues 194–221 (GANSQGTSPQPGSVRSNNNRNTECTTPP) show a composition bias toward polar residues. Composition is skewed to gly residues over residues 222–231 (GSGGSSGNSG), 240–254 (TNGGGSSGGSNGGSN), and 264–292 (SNGGGSSNSGGSNGGGSNGGGSSNGGGSN). Low complexity-rich tracts occupy residues 293 to 303 (AGSSGSSGSSS) and 319 to 332 (PSPSSGSRVGSGVR). Positions 344–355 (GGSGGQGQGSSG) are enriched in gly residues.

It belongs to the dermokine family. As to quaternary structure, homooligomer. Seems to be able to homodimerize and homotrimerize. O-glycosylated.

Its subcellular location is the secreted. May act as a soluble regulator of keratinocyte differentiation. The polypeptide is Dermokine (DMKN) (Bos taurus (Bovine)).